The primary structure comprises 135 residues: MCGECYAYLTCIWCKKGLDKVDAKRCHEKKIRIACRNGKHCAVCTSCLENGLYLERSLFPGRPIYPGDLYEPDPWVMFNDIRCMYCGGCLTRDEKERHRLFCEDFWIFRHQVRGRCYLCTRHGSRPPYKETPAAV.

Zinc fingers lie at residues 11-47 (CIWC…CTSC) and 83-119 (CMYC…CYLC).

This sequence belongs to the papillomaviridae E6 protein family. In terms of assembly, forms homodimers. Interacts with ubiquitin-protein ligase UBE3A/E6-AP; this interaction stimulates UBE3A ubiquitin activity. Interacts with host BAK1.

Its subcellular location is the host cytoplasm. The protein resides in the host nucleus. In terms of biological role, plays a major role in the induction and maintenance of cellular transformation. E6 associates with host UBE3A/E6-AP ubiquitin-protein ligase and modulates its activity. Protects host keratinocytes from apoptosis by mediating the degradation of host BAK1. May also inhibit host immune response. The chain is Protein E6 from Cervus elaphus (Red deer).